A 173-amino-acid polypeptide reads, in one-letter code: MAEKRNIFLVGPMGAGKSTIGRQLAQQLNMEFFDSDQEIERRTGADVGWVFDVEGEDGFRDREEKVINELTEKQGIVLATGGGSVKSRETRNRLSARGVVVYLETTIEKQLARTQRDKKRPLLQVEAPPREVLEALARERNPLYEEIADVTIRTDEQSAKVVANQIINMLESS.

14 to 19 (GAGKST) is an ATP binding site. Ser18 provides a ligand contact to Mg(2+). Residues Asp36, Arg60, and Gly82 each contribute to the substrate site. Arg120 serves as a coordination point for ATP. A substrate-binding site is contributed by Arg140. Residue Gln157 participates in ATP binding.

It belongs to the shikimate kinase family. In terms of assembly, monomer. It depends on Mg(2+) as a cofactor.

Its subcellular location is the cytoplasm. The enzyme catalyses shikimate + ATP = 3-phosphoshikimate + ADP + H(+). It participates in metabolic intermediate biosynthesis; chorismate biosynthesis; chorismate from D-erythrose 4-phosphate and phosphoenolpyruvate: step 5/7. Catalyzes the specific phosphorylation of the 3-hydroxyl group of shikimic acid using ATP as a cosubstrate. The chain is Shikimate kinase 1 from Sodalis glossinidius (strain morsitans).